Reading from the N-terminus, the 305-residue chain is uncharacterized protein (305 aa).

Belongs to the IIV-6 436R family.

This is an uncharacterized protein from Acheta domesticus (House cricket).